Here is a 439-residue protein sequence, read N- to C-terminus: Tol-Pal system protein TolB (439 aa).

Positions 1–22 (MKKPLRWLAALTALLLPLSAFA) are cleaved as a signal peptide.

Belongs to the TolB family. As to quaternary structure, the Tol-Pal system is composed of five core proteins: the inner membrane proteins TolA, TolQ and TolR, the periplasmic protein TolB and the outer membrane protein Pal. They form a network linking the inner and outer membranes and the peptidoglycan layer.

The protein resides in the periplasm. Its function is as follows. Part of the Tol-Pal system, which plays a role in outer membrane invagination during cell division and is important for maintaining outer membrane integrity. The chain is Tol-Pal system protein TolB from Xanthomonas campestris pv. campestris (strain 8004).